Reading from the N-terminus, the 330-residue chain is Probable transposase for insertion sequence element ISH11 (330 aa).

This sequence belongs to the transposase 11 family.

Its function is as follows. Involved in the transposition of the insertion sequence ISH11. In Halobacterium salinarum (strain ATCC 29341 / DSM 671 / R1), this protein is Probable transposase for insertion sequence element ISH11.